A 185-amino-acid chain; its full sequence is Ribosome-recycling factor (185 aa).

This sequence belongs to the RRF family.

It localises to the cytoplasm. In terms of biological role, responsible for the release of ribosomes from messenger RNA at the termination of protein biosynthesis. May increase the efficiency of translation by recycling ribosomes from one round of translation to another. This chain is Ribosome-recycling factor, found in Pseudoalteromonas atlantica (strain T6c / ATCC BAA-1087).